The primary structure comprises 131 residues: Large ribosomal subunit protein bL12 (131 aa).

It belongs to the bacterial ribosomal protein bL12 family. As to quaternary structure, homodimer. Part of the ribosomal stalk of the 50S ribosomal subunit. Forms a multimeric L10(L12)X complex, where L10 forms an elongated spine to which 2 to 4 L12 dimers bind in a sequential fashion. Binds GTP-bound translation factors.

Functionally, forms part of the ribosomal stalk which helps the ribosome interact with GTP-bound translation factors. Is thus essential for accurate translation. In Prochlorococcus marinus (strain MIT 9215), this protein is Large ribosomal subunit protein bL12.